The chain runs to 469 residues: 3-isopropylmalate dehydratase large subunit (469 aa).

The [4Fe-4S] cluster site is built by Cys-347, Cys-410, and Cys-413.

The protein belongs to the aconitase/IPM isomerase family. LeuC type 1 subfamily. Heterodimer of LeuC and LeuD. It depends on [4Fe-4S] cluster as a cofactor.

The enzyme catalyses (2R,3S)-3-isopropylmalate = (2S)-2-isopropylmalate. It participates in amino-acid biosynthesis; L-leucine biosynthesis; L-leucine from 3-methyl-2-oxobutanoate: step 2/4. Its function is as follows. Catalyzes the isomerization between 2-isopropylmalate and 3-isopropylmalate, via the formation of 2-isopropylmaleate. This is 3-isopropylmalate dehydratase large subunit from Cupriavidus pinatubonensis (strain JMP 134 / LMG 1197) (Cupriavidus necator (strain JMP 134)).